Here is a 338-residue protein sequence, read N- to C-terminus: Ketol-acid reductoisomerase (NADP(+)) (338 aa).

Residues 1–181 (MKVFYDKDCD…GGGRAGIIET (181 aa)) enclose the KARI N-terminal Rossmann domain. Residues 24–27 (YGSQ), arginine 47, and serine 52 contribute to the NADP(+) site. Histidine 107 is an active-site residue. Glycine 133 is a binding site for NADP(+). In terms of domain architecture, KARI C-terminal knotted spans 182–327 (NFREETETDL…GKLRAMMPWI (146 aa)). 4 residues coordinate Mg(2+): aspartate 190, glutamate 194, glutamate 226, and glutamate 230. Serine 251 is a binding site for substrate.

Belongs to the ketol-acid reductoisomerase family. The cofactor is Mg(2+).

It carries out the reaction (2R)-2,3-dihydroxy-3-methylbutanoate + NADP(+) = (2S)-2-acetolactate + NADPH + H(+). The enzyme catalyses (2R,3R)-2,3-dihydroxy-3-methylpentanoate + NADP(+) = (S)-2-ethyl-2-hydroxy-3-oxobutanoate + NADPH + H(+). It participates in amino-acid biosynthesis; L-isoleucine biosynthesis; L-isoleucine from 2-oxobutanoate: step 2/4. Its pathway is amino-acid biosynthesis; L-valine biosynthesis; L-valine from pyruvate: step 2/4. In terms of biological role, involved in the biosynthesis of branched-chain amino acids (BCAA). Catalyzes an alkyl-migration followed by a ketol-acid reduction of (S)-2-acetolactate (S2AL) to yield (R)-2,3-dihydroxy-isovalerate. In the isomerase reaction, S2AL is rearranged via a Mg-dependent methyl migration to produce 3-hydroxy-3-methyl-2-ketobutyrate (HMKB). In the reductase reaction, this 2-ketoacid undergoes a metal-dependent reduction by NADPH to yield (R)-2,3-dihydroxy-isovalerate. The polypeptide is Ketol-acid reductoisomerase (NADP(+)) (Bordetella bronchiseptica (strain ATCC BAA-588 / NCTC 13252 / RB50) (Alcaligenes bronchisepticus)).